A 130-amino-acid chain; its full sequence is Small ribosomal subunit protein uS8 (130 aa).

The protein belongs to the universal ribosomal protein uS8 family. In terms of assembly, part of the 30S ribosomal subunit. Contacts proteins S5 and S12.

Its function is as follows. One of the primary rRNA binding proteins, it binds directly to 16S rRNA central domain where it helps coordinate assembly of the platform of the 30S subunit. The sequence is that of Small ribosomal subunit protein uS8 from Alteromonas mediterranea (strain DSM 17117 / CIP 110805 / LMG 28347 / Deep ecotype).